The chain runs to 273 residues: 4-hydroxy-tetrahydrodipicolinate reductase (273 aa).

NAD(+) contacts are provided by residues 11-16, 102-104, and 126-129; these read GALGRM, GTT, and SPNF. Catalysis depends on His159, which acts as the Proton donor/acceptor. His160 contributes to the (S)-2,3,4,5-tetrahydrodipicolinate binding site. The active-site Proton donor is the Lys163. 169–170 contacts (S)-2,3,4,5-tetrahydrodipicolinate; sequence GT.

The protein belongs to the DapB family. Homotetramer.

It localises to the cytoplasm. The enzyme catalyses (S)-2,3,4,5-tetrahydrodipicolinate + NAD(+) + H2O = (2S,4S)-4-hydroxy-2,3,4,5-tetrahydrodipicolinate + NADH + H(+). It catalyses the reaction (S)-2,3,4,5-tetrahydrodipicolinate + NADP(+) + H2O = (2S,4S)-4-hydroxy-2,3,4,5-tetrahydrodipicolinate + NADPH + H(+). Its pathway is amino-acid biosynthesis; L-lysine biosynthesis via DAP pathway; (S)-tetrahydrodipicolinate from L-aspartate: step 4/4. Functionally, catalyzes the conversion of 4-hydroxy-tetrahydrodipicolinate (HTPA) to tetrahydrodipicolinate. The chain is 4-hydroxy-tetrahydrodipicolinate reductase from Buchnera aphidicola subsp. Cinara cedri (strain Cc).